A 127-amino-acid polypeptide reads, in one-letter code: Photosystem II reaction center Psb28 protein (127 aa).

The disordered stretch occupies residues Gly-107–Ala-127. The span at Gly-109 to Gln-118 shows a compositional bias: polar residues.

Belongs to the Psb28 family. In terms of assembly, part of the photosystem II complex.

It is found in the cellular thylakoid membrane. The chain is Photosystem II reaction center Psb28 protein from Parasynechococcus marenigrum (strain WH8102).